Reading from the N-terminus, the 190-residue chain is Threonylcarbamoyl-AMP synthase (190 aa).

In terms of domain architecture, YrdC-like spans 7 to 190; that stretch reads GDAIAAAIDV…ALTGELFRQG (184 aa).

The protein belongs to the SUA5 family. TsaC subfamily.

The protein localises to the cytoplasm. The enzyme catalyses L-threonine + hydrogencarbonate + ATP = L-threonylcarbamoyladenylate + diphosphate + H2O. Functionally, required for the formation of a threonylcarbamoyl group on adenosine at position 37 (t(6)A37) in tRNAs that read codons beginning with adenine. Catalyzes the conversion of L-threonine, HCO(3)(-)/CO(2) and ATP to give threonylcarbamoyl-AMP (TC-AMP) as the acyladenylate intermediate, with the release of diphosphate. The polypeptide is Threonylcarbamoyl-AMP synthase (Escherichia coli O1:K1 / APEC).